Consider the following 840-residue polypeptide: Homeobox-leucine zipper protein HOX9 (840 aa).

Disordered stretches follow at residues 1-26 (MAAA…AGMD) and 135-160 (NPSL…DASN). The segment covering 12-21 (GSDGGGGGYD) has biased composition (gly residues). The segment at residues 26-89 (DSGKYVRYTP…NRRCRDKQRK (64 aa)) is a DNA-binding region (homeobox). The stretch at 86–135 (KQRKEASRLQAVNRKLTAMNKLLMEENERLQKQVSQLVHENAYMKQQLQN) forms a coiled coil. Residues 157-385 (DASNPSGLLT…IAQETSGEVV (229 aa)) form the START domain.

This sequence belongs to the HD-ZIP homeobox family. Class III subfamily. As to expression, expressed in seedlings, roots, stems, leaf sheaths and blades and panicles.

It localises to the nucleus. Functionally, probable transcription factor. This is Homeobox-leucine zipper protein HOX9 (HOX9) from Oryza sativa subsp. japonica (Rice).